Here is a 336-residue protein sequence, read N- to C-terminus: Probable assembly chaperone of rpl4 (336 aa).

4 TPR repeats span residues Gly39–Leu72, Asp75–Leu108, Ile110–Ala143, and Ala162–Ala195. Positions Asp316–Asp336 are disordered.

It belongs to the ACL4 family.

Its subcellular location is the cytoplasm. It is found in the nucleus. The protein resides in the nucleolus. Its function is as follows. Acts as a chaperone for the L4 ribosomal subunit encoded by rpl4A and rpl4B, required for hierarchical ribosome assembly. Shields ribosomal protein L4 until timely release and insertion into the pre-ribosome is possible, once ribosomal protein L18 is present. The polypeptide is Probable assembly chaperone of rpl4 (Schizosaccharomyces pombe (strain 972 / ATCC 24843) (Fission yeast)).